The primary structure comprises 456 residues: Histidinol dehydrogenase homolog (456 aa).

His-279 is a Zn(2+) binding site. Residues Glu-347 and His-348 each act as proton acceptor in the active site. Residue His-440 coordinates Zn(2+).

The protein belongs to the histidinol dehydrogenase family. It depends on Zn(2+) as a cofactor.

The sequence is that of Histidinol dehydrogenase homolog from Rhizobium meliloti (strain 1021) (Ensifer meliloti).